A 331-amino-acid polypeptide reads, in one-letter code: Phosphate acyltransferase (331 aa).

It belongs to the PlsX family. As to quaternary structure, homodimer. Probably interacts with PlsY.

It is found in the cytoplasm. It carries out the reaction a fatty acyl-[ACP] + phosphate = an acyl phosphate + holo-[ACP]. Its pathway is lipid metabolism; phospholipid metabolism. In terms of biological role, catalyzes the reversible formation of acyl-phosphate (acyl-PO(4)) from acyl-[acyl-carrier-protein] (acyl-ACP). This enzyme utilizes acyl-ACP as fatty acyl donor, but not acyl-CoA. The protein is Phosphate acyltransferase of Ureaplasma parvum serovar 3 (strain ATCC 27815 / 27 / NCTC 11736).